The following is a 268-amino-acid chain: Phosphate import ATP-binding protein PstB 3 (268 aa).

The 240-residue stretch at 15–254 folds into the ABC transporter domain; it reads LRTENLNVYY…DATESIFNNP (240 aa). Residue 47 to 54 coordinates ATP; that stretch reads GPSGCGKS.

The protein belongs to the ABC transporter superfamily. Phosphate importer (TC 3.A.1.7) family. The complex is composed of two ATP-binding proteins (PstB), two transmembrane proteins (PstC and PstA) and a solute-binding protein (PstS).

It localises to the cell inner membrane. It carries out the reaction phosphate(out) + ATP + H2O = ADP + 2 phosphate(in) + H(+). Part of the ABC transporter complex PstSACB involved in phosphate import. Responsible for energy coupling to the transport system. The polypeptide is Phosphate import ATP-binding protein PstB 3 (Nostoc sp. (strain PCC 7120 / SAG 25.82 / UTEX 2576)).